Here is a 651-residue protein sequence, read N- to C-terminus: E3 SUMO-protein ligase PIAS1 (651 aa).

Alanine 2 is modified (N-acetylalanine). The segment at 2 to 200 (ADSAELKQMV…KCDFTVQVQL (199 aa)) is required for interaction with MSX1. Residues 11–45 (VMSLRVSELQVLLGYAGRNKHGRKHELLTKALHLL) form the SAP domain. An LXXLL motif motif is present at residues 19–23 (LQVLL). Residues lysine 40 and lysine 46 each participate in a glycyl lysine isopeptide (Lys-Gly) (interchain with G-Cter in SUMO2) cross-link. The Nuclear localization signal motif lies at 56-64 (KIKELYRRR). In terms of domain architecture, PINIT spans 124–288 (HLTSALHPVH…SMAVYLVKQL (165 aa)). Glycyl lysine isopeptide (Lys-Gly) (interchain with G-Cter in SUMO2) cross-links involve residues lysine 137 and lysine 238. An SP-RING-type zinc finger spans residues 320 to 405 (PDSEIATTSL…LKYCTDCDEI (86 aa)). Zn(2+) contacts are provided by cysteine 351, histidine 353, cysteine 374, and cysteine 377. The Nuclear localization signal motif lies at 368–380 (KKPTWVCPVCDKK). Lysine 453 participates in a covalent cross-link: Glycyl lysine isopeptide (Lys-Gly) (interchain with G-Cter in SUMO2). An SUMO1-binding region spans residues 462 to 473 (LTIDSSSDEEEE). The tract at residues 465–511 (DSSSDEEEEEPPAKRTCPSLSPTSPLSNKGILSLPHQASPVSRTPSL) is disordered. Residues serine 467, serine 468, serine 483, and serine 485 each carry the phosphoserine modification. Residues 482–491 (PSLSPTSPLS) are compositionally biased toward low complexity. Position 487 is a phosphothreonine (threonine 487). Phosphoserine occurs at positions 488 and 491. Lysine 493 participates in a covalent cross-link: Glycyl lysine isopeptide (Lys-Gly) (interchain with G-Cter in SUMO2). Phosphoserine occurs at positions 503, 510, and 522. A run of 2 repeats spans residues 520-523 (NTSL) and 557-560 (NTSL). Positions 520–615 (NTSLIQDYRH…GSSSGSNSSL (96 aa)) are 4 X 4 AA repeats of N-T-S-L. The 3; approximate repeat unit spans residues 598–601 (STSL). The disordered stretch occupies residues 600–630 (SLPATNGSSSGSNSSLVSSNSLRESHGHGVA). The span at 605-621 (NGSSSGSNSSLVSSNSL) shows a compositional bias: low complexity. A 4; approximate repeat occupies 612–615 (NSSL).

Belongs to the PIAS family. As to quaternary structure, interacts with NR2C1; the interaction promotes its sumoylation. Interacts with DDX21, CSRP2, AXIN1, JUN, SATB2, PLAG1, TP53 and STAT1 (dimer), following IFNA1-stimulation. Interacts with SP3 (preferentially when SUMO-modified). Interacts with KLF8; the interaction results in SUMO ligation and repression of KLF8 transcriptional activity and of its cell cycle progression into G(1) phase. Interacts with CHUK/IKKA; this interaction induces PIAS1 phosphorylation. Interacts with PTK2/FAK1; the interaction promotes its sumoylation. Interacts with SUMO1, UBE2I, NCOA2 and AR. Interacts with NR2C1; the interaction promotes its sumoylation. Interacts with DDX5. Interacts with MTA1. Interacts with PML (isoform PML-12). Interacts with PRDM1. Interacts (via N-terminus) with MSX1 (via C-terminus); the interaction is required for the localization of both proteins to the nuclear periphery and specific binding of MSX1 to the core enhancer region in target gene promoters. Post-translationally, sumoylated. As to expression, expressed in kidney, heart, spleen, brain and cerebellum; weak expression, if any, in liver and lung.

Its subcellular location is the nucleus. The protein resides in the nucleus speckle. The protein localises to the PML body. It is found in the cytoplasm. It localises to the cytoskeleton. It carries out the reaction S-ubiquitinyl-[E2 ubiquitin-conjugating enzyme]-L-cysteine + [acceptor protein]-L-lysine = [E2 ubiquitin-conjugating enzyme]-L-cysteine + N(6)-ubiquitinyl-[acceptor protein]-L-lysine.. It participates in protein modification; protein sumoylation. In terms of biological role, functions as an E3-type small ubiquitin-like modifier (SUMO) ligase, stabilizing the interaction between UBE2I and the substrate, and as a SUMO-tethering factor. Catalyzes sumoylation of various proteins, such as CEBPB, MRE11, MTA1, PTK2 and PML. Plays a crucial role as a transcriptional coregulation in various cellular pathways, including the STAT pathway, the p53 pathway and the steroid hormone signaling pathway. In vitro, binds A/T-rich DNA. The effects of this transcriptional coregulation, transactivation or silencing, may vary depending upon the biological context. Mediates sumoylation of MRE11, stabilizing MRE11 on chromatin during end resection. Sumoylates PML (at 'Lys-65' and 'Lys-160') and PML-RAR and promotes their ubiquitin-mediated degradation. PIAS1-mediated sumoylation of PML promotes its interaction with CSNK2A1/CK2 which in turn promotes PML phosphorylation and degradation. Enhances the sumoylation of MTA1 and may participate in its paralog-selective sumoylation. Plays a dynamic role in adipogenesis by promoting the SUMOylation and degradation of CEBPB. Mediates the nuclear mobility and localization of MSX1 to the nuclear periphery, whereby MSX1 is brought into the proximity of target myoblast differentiation factor genes. Also required for the binding of MSX1 to the core enhancer region in target gene promoter regions, independent of its sumoylation activity. Capable of binding to the core enhancer region TAAT box in the MYOD1 gene promoter. The polypeptide is E3 SUMO-protein ligase PIAS1 (Pias1) (Mus musculus (Mouse)).